We begin with the raw amino-acid sequence, 222 residues long: Glutathione S-transferase A1 (222 aa).

Methionine 1 is subject to N-acetylmethionine. At alanine 2 the chain carries N-acetylalanine; in Glutathione S-transferase A1, N-terminally processed. A GST N-terminal domain is found at 3–83; the sequence is GKPTLHYFNG…YIATKYNLYG (81 aa). Lysine 4 is modified (N6-succinyllysine). Glutathione contacts are provided by residues tyrosine 9, lysine 45, 54–55, and 67–68; these read QV and QT. Residues 85–208 form the GST C-terminal domain; the sequence is DMKERALIDM…QPGSQRKPPT (124 aa).

Belongs to the GST superfamily. Alpha family. In terms of assembly, homodimer or heterodimer of GSTA1 and GSTA2. Expressed in corpus luteum, adrenal gland, testis, liver, lung, thyroid and kidney.

The protein localises to the cytoplasm. It carries out the reaction RX + glutathione = an S-substituted glutathione + a halide anion + H(+). The enzyme catalyses prostaglandin A2 + glutathione = prostaglandin A2-S-(R)-glutathione. It catalyses the reaction prostaglandin J2 + glutathione = prostaglandin J2-S-(R)-glutathione. The catalysed reaction is (13S)-hydroperoxy-(9Z,11E)-octadecadienoate + 2 glutathione = (13S)-hydroxy-(9Z,11E)-octadecadienoate + glutathione disulfide + H2O. It carries out the reaction androst-5-ene-3,17-dione = androst-4-ene-3,17-dione. Functionally, glutathione S-transferase that catalyzes the nucleophilic attack of the sulfur atom of glutathione on the electrophilic groups of a wide range of exogenous and endogenous compounds. Involved in the formation of glutathione conjugates of both prostaglandin A2 (PGA2) and prostaglandin J2 (PGJ2). It also catalyzes the isomerization of D5-androstene-3,17-dione (AD) into D4-androstene-3,17-dione and may therefore play an important role in hormone biosynthesis. Through its glutathione-dependent peroxidase activity toward the fatty acid hydroperoxide (13S)-hydroperoxy-(9Z,11E)-octadecadienoate/13-HPODE it is also involved in the metabolism of oxidized linoleic acid. In Bos taurus (Bovine), this protein is Glutathione S-transferase A1 (GSTA1).